The primary structure comprises 463 residues: ATP synthase subunit beta (463 aa).

152-159 (GGAGVGKT) lines the ATP pocket.

It belongs to the ATPase alpha/beta chains family. As to quaternary structure, F-type ATPases have 2 components, CF(1) - the catalytic core - and CF(0) - the membrane proton channel. CF(1) has five subunits: alpha(3), beta(3), gamma(1), delta(1), epsilon(1). CF(0) has three main subunits: a(1), b(2) and c(9-12). The alpha and beta chains form an alternating ring which encloses part of the gamma chain. CF(1) is attached to CF(0) by a central stalk formed by the gamma and epsilon chains, while a peripheral stalk is formed by the delta and b chains.

It is found in the cell inner membrane. The catalysed reaction is ATP + H2O + 4 H(+)(in) = ADP + phosphate + 5 H(+)(out). Its function is as follows. Produces ATP from ADP in the presence of a proton gradient across the membrane. The catalytic sites are hosted primarily by the beta subunits. The protein is ATP synthase subunit beta of Shewanella sp. (strain MR-7).